The primary structure comprises 274 residues: Large ribosomal subunit protein uL2 (274 aa).

A disordered region spans residues 195–274 (VGNSDHGLES…SKYIIERRKK (80 aa)). Composition is skewed to basic residues over residues 209–220 (GRSRWQGRRPRN) and 244–264 (PRSR…KKQS).

The protein belongs to the universal ribosomal protein uL2 family. In terms of assembly, part of the 50S ribosomal subunit. Forms a bridge to the 30S subunit in the 70S ribosome.

In terms of biological role, one of the primary rRNA binding proteins. Required for association of the 30S and 50S subunits to form the 70S ribosome, for tRNA binding and peptide bond formation. It has been suggested to have peptidyltransferase activity; this is somewhat controversial. Makes several contacts with the 16S rRNA in the 70S ribosome. The protein is Large ribosomal subunit protein uL2 of Bacteroides fragilis (strain ATCC 25285 / DSM 2151 / CCUG 4856 / JCM 11019 / LMG 10263 / NCTC 9343 / Onslow / VPI 2553 / EN-2).